The chain runs to 335 residues: Probable G-protein coupled receptor 174 (335 aa).

Over 1 to 27 (MTDNFTCNKTDGDNTDFRYFIYAVTYT) the chain is Extracellular. Residues N4 and N8 are each glycosylated (N-linked (GlcNAc...) asparagine). A helical membrane pass occupies residues 28-48 (VILVPGLIGNILALWVFYGYM). Residues 49 to 53 (KETKR) are Cytoplasmic-facing. The chain crosses the membrane as a helical span at residues 54-74 (AVVFMINLAIADLLQILSLPL). Residues 75–91 (RIFYYLNHDWPFGPGLC) are Extracellular-facing. C91 and C168 are disulfide-bonded. Residues 92 to 112 (MFCFYLKYVNMYASIYFLVCI) form a helical membrane-spanning segment. Residues 113-134 (SVRRFWFLMYPFRFNDCKQKYD) are Cytoplasmic-facing. Residues 135 to 155 (LYISIIGWLIICLACLLFPLL) traverse the membrane as a helical segment. Over 156 to 182 (RTNDDTPGNRTKCFVDLPIRNVNLAQS) the chain is Extracellular. N-linked (GlcNAc...) asparagine glycosylation occurs at N164. The chain crosses the membrane as a helical span at residues 183–203 (VAMITIGEVVGFVTPLMIVLY). The Cytoplasmic portion of the chain corresponds to 204 to 231 (CTWKTALSLQNKYPISQHLGEKKKALKM). The chain crosses the membrane as a helical span at residues 232 to 252 (ILTCAGVFLVCFVPYHFSFPL). Over 253–268 (DFLVKSNEIKSCFARR) the chain is Extracellular. The helical transmembrane segment at 269 to 289 (VILIFHSVALCLASLNSCLDP) threads the bilayer. The Cytoplasmic segment spans residues 290–335 (VIYYFTTNEFRRRLSRQDLPDNIQLHTKSYKIASNHATSTVAAELC).

It belongs to the G-protein coupled receptor 1 family. Interacts with GNA13. Interacts with CCL21. As to expression, expressed in spleen and, at low levels, in brain. Highly expressed in developing and mature regulatory T-cells.

It is found in the cell membrane. In terms of biological role, G-protein-coupled receptor of lysophosphatidylserine (LysoPS) that plays different roles in immune response. Plays a negative role in regulatory T-cell accumulation and homeostasis. Under inflammatory conditions where LysoPS production increases, contributes to the down-regulation of regulatory T-cell activity to favor effector response. Mediates the suppression of IL-2 production in activated T-lymphocytes leading to inhibition of growth, proliferation and differentiation of T-cells. Mechanistically, acts via G(s)-containing heterotrimeric G proteins to trigger elevated cyclic AMP levels and protein kinase A/PKA activity, which may in turn act to antagonize proximal TCR signaling. Plays an important role in the initial period of sepsis through the regulation of macrophage polarization and pro- and anti-inflammatory cytokine secretions. Upon testosterone treatment, acts as a receptor for CCL21 and subsequently triggers through G(q)-alpha and G(12)/G(13) proteins a calcium flux leading to chemotactic effects on activated B-cells. Signals via GNA13 and PKA to promote CD86 up-regulation by follicular B-cells. The chain is Probable G-protein coupled receptor 174 (Gpr174) from Mus musculus (Mouse).